The primary structure comprises 570 residues: Dwarfin sma-4 (570 aa).

The tract at residues 115–134 (SSQASSQPPPTPTVNPTPIP) is disordered. The span at 121–134 (QPPPTPTVNPTPIP) shows a compositional bias: pro residues. The MH1 domain maps to 150-273 (QISHVLQCYQ…YERVVSNRIT (124 aa)). Residues Cys-203, Cys-247, Cys-258, and His-263 each contribute to the Zn(2+) site. The region spanning 350–570 (WCSIIYYELD…LKNSSQFGSS (221 aa)) is the MH2 domain.

The protein belongs to the dwarfin/SMAD family.

It is found in the cytoplasm. It localises to the nucleus. Involved in TGF-beta pathway. This Caenorhabditis elegans protein is Dwarfin sma-4 (sma-4).